The following is a 493-amino-acid chain: Cell division protein FtsA (493 aa).

The interval 434-468 is disordered; the sequence is AHQSNPTPHIHSSPTERNLSDLKTPSAPLNTAKND. The span at 436-465 shows a compositional bias: polar residues; that stretch reads QSNPTPHIHSSPTERNLSDLKTPSAPLNTA.

The protein belongs to the FtsA/MreB family. Self-interacts. Interacts with FtsZ.

The protein localises to the cell inner membrane. Cell division protein that is involved in the assembly of the Z ring. May serve as a membrane anchor for the Z ring. This chain is Cell division protein FtsA, found in Helicobacter pylori (strain J99 / ATCC 700824) (Campylobacter pylori J99).